We begin with the raw amino-acid sequence, 455 residues long: UDP-N-acetylmuramoylalanine--D-glutamate ligase (455 aa).

G118–T124 provides a ligand contact to ATP.

The protein belongs to the MurCDEF family.

It localises to the cytoplasm. It catalyses the reaction UDP-N-acetyl-alpha-D-muramoyl-L-alanine + D-glutamate + ATP = UDP-N-acetyl-alpha-D-muramoyl-L-alanyl-D-glutamate + ADP + phosphate + H(+). It functions in the pathway cell wall biogenesis; peptidoglycan biosynthesis. In terms of biological role, cell wall formation. Catalyzes the addition of glutamate to the nucleotide precursor UDP-N-acetylmuramoyl-L-alanine (UMA). The chain is UDP-N-acetylmuramoylalanine--D-glutamate ligase from Chromohalobacter salexigens (strain ATCC BAA-138 / DSM 3043 / CIP 106854 / NCIMB 13768 / 1H11).